The sequence spans 963 residues: Translation initiation factor IF-2 (963 aa).

The segment covering S53–Q77 has biased composition (basic and acidic residues). Residues S53–P377 form a disordered region. The segment covering S78–V87 has biased composition (polar residues). Basic and acidic residues-rich tracts occupy residues I98–D110, E123–E183, D197–A250, and P267–E278. Residues S343–G356 show a composition bias toward gly residues. The tr-type G domain occupies P463–K632. A G1 region spans residues G472–T479. G472–T479 contacts GTP. The tract at residues G497–H501 is G2. The tract at residues D518–G521 is G3. GTP is bound by residues D518 to H522 and N572 to D575. A G4 region spans residues N572–D575. The G5 stretch occupies residues S608–K610.

The protein belongs to the TRAFAC class translation factor GTPase superfamily. Classic translation factor GTPase family. IF-2 subfamily.

The protein resides in the cytoplasm. Its function is as follows. One of the essential components for the initiation of protein synthesis. Protects formylmethionyl-tRNA from spontaneous hydrolysis and promotes its binding to the 30S ribosomal subunits. Also involved in the hydrolysis of GTP during the formation of the 70S ribosomal complex. This chain is Translation initiation factor IF-2, found in Cupriavidus taiwanensis (strain DSM 17343 / BCRC 17206 / CCUG 44338 / CIP 107171 / LMG 19424 / R1) (Ralstonia taiwanensis (strain LMG 19424)).